A 465-amino-acid chain; its full sequence is Cysteine--tRNA ligase (465 aa).

Cys-27 is a Zn(2+) binding site. Residues 29–39 (PTVYDDAHLGH) carry the 'HIGH' region motif. Residues Cys-207, His-237, and Glu-241 each contribute to the Zn(2+) site. The short motif at 269-273 (KMSKS) is the 'KMSKS' region element. Lys-272 is an ATP binding site.

The protein belongs to the class-I aminoacyl-tRNA synthetase family. Monomer. Zn(2+) is required as a cofactor.

It localises to the cytoplasm. It carries out the reaction tRNA(Cys) + L-cysteine + ATP = L-cysteinyl-tRNA(Cys) + AMP + diphosphate. This Helicobacter pylori (strain HPAG1) protein is Cysteine--tRNA ligase.